A 148-amino-acid chain; its full sequence is 3-dehydroquinate dehydratase (148 aa).

The active-site Proton acceptor is Tyr22. The substrate site is built by Asn73, His79, and Asp86. The active-site Proton donor is the His99. Substrate-binding positions include 100–101 (LS) and Arg110.

It belongs to the type-II 3-dehydroquinase family. Homododecamer.

It carries out the reaction 3-dehydroquinate = 3-dehydroshikimate + H2O. It functions in the pathway metabolic intermediate biosynthesis; chorismate biosynthesis; chorismate from D-erythrose 4-phosphate and phosphoenolpyruvate: step 3/7. Its function is as follows. Catalyzes a trans-dehydration via an enolate intermediate. In Prochlorococcus marinus (strain MIT 9211), this protein is 3-dehydroquinate dehydratase.